The primary structure comprises 276 residues: Large ribosomal subunit protein uL2 (276 aa).

Disordered regions lie at residues 36-58 (PLHK…GGGH) and 214-276 (LGKR…RRKK).

The protein belongs to the universal ribosomal protein uL2 family. As to quaternary structure, part of the 50S ribosomal subunit. Forms a bridge to the 30S subunit in the 70S ribosome.

Functionally, one of the primary rRNA binding proteins. Required for association of the 30S and 50S subunits to form the 70S ribosome, for tRNA binding and peptide bond formation. It has been suggested to have peptidyltransferase activity; this is somewhat controversial. Makes several contacts with the 16S rRNA in the 70S ribosome. The sequence is that of Large ribosomal subunit protein uL2 from Halalkalibacterium halodurans (strain ATCC BAA-125 / DSM 18197 / FERM 7344 / JCM 9153 / C-125) (Bacillus halodurans).